Reading from the N-terminus, the 157-residue chain is Large ribosomal subunit protein uL15 (157 aa).

It belongs to the universal ribosomal protein uL15 family. As to quaternary structure, part of the 50S ribosomal subunit.

Binds to the 23S rRNA. This is Large ribosomal subunit protein uL15 from Ehrlichia ruminantium (strain Welgevonden).